Consider the following 175-residue polypeptide: Early E1A protein (175 aa).

Residues 40 to 48 (PSLHDLFDL) are interaction with RB1 in competition with E2F1. The LXCXE motif, interaction with host RB1 signature appears at 106-110 (LLCLE). A zinc finger spans residues 146 to 164 (CLRCAYYQEQGENSICGLC).

The protein belongs to the adenoviridae E1A protein family. Interacts with host UBE2I; this interaction interferes with polySUMOylation. Interacts with host RB1; this interaction induces the aberrant dissociation of RB1-E2F1 complex thereby disrupting the activity of RB1 and activating E2F1-regulated genes. Interacts with host ATF7; the interaction enhances ATF7-mediated viral transactivation activity which requires the zinc binding domains of both proteins. Isoform early E1A 32 kDa protein and isoform early E1A 26 kDa protein interact (via N-terminus) with CUL1 and E3 ubiquitin ligase RBX1; these interactions inhibit RBX1-CUL1-dependent elongation reaction of ubiquitin chains and attenuate ubiquitination of SCF(FBXW7) target proteins. Interacts (via PXLXP motif) with host ZMYND11/BS69 (via MYND-type zinc finger); this interaction inhibits E1A mediated transactivation. Interacts with host EP300; this interaction stimulates the acetylation of RB1 by recruiting EP300 and RB1 into a multimeric-protein complex. Interacts with host CTBP1 and CTBP2; this interaction seems to potentiate viral replication. Interacts with host DCAF7. Interacts with host DYRK1A. Interacts with host KPNA4; this interaction allows E1A import into the host nucleus. Interacts with host EP400; this interaction stabilizes MYC. Interacts with host TBP protein; this interaction probably disrupts the TBP-TATA complex.

The protein localises to the host nucleus. Plays a role in viral genome replication by driving entry of quiescent cells into the cell cycle. Stimulation of progression from G1 to S phase allows the virus to efficiently use the cellular DNA replicating machinery to achieve viral genome replication. E1A protein has both transforming and trans-activating activities. Induces the disassembly of the E2F1 transcription factor from RB1 by direct competition for the same binding site on RB1, with subsequent transcriptional activation of E2F1-regulated S-phase genes and of the E2 region of the adenoviral genome. Release of E2F1 leads to the ARF-mediated inhibition of MDM2 and causes TP53/p53 to accumulate because it is not targeted for degradation by MDM2-mediated ubiquitination anymore. This increase in TP53, in turn, would arrest the cell proliferation and direct its death but this effect is counteracted by the viral protein E1B-55K. Inactivation of the ability of RB1 to arrest the cell cycle is critical for cellular transformation, uncontrolled cellular growth and proliferation induced by viral infection. Interaction with RBX1 and CUL1 inhibits ubiquitination of the proteins targeted by SCF(FBXW7) ubiquitin ligase complex, and may be linked to unregulated host cell proliferation. The tumorigenesis-restraining activity of E1A may be related to the disruption of the host CtBP-CtIP complex through the CtBP binding motif. The polypeptide is Early E1A protein (Canis lupus familiaris (Dog)).